Here is a 94-residue protein sequence, read N- to C-terminus: Mitochondrial import receptor subunit TOM9-1 (94 aa).

The Cytoplasmic segment spans residues methionine 1 to lysine 48. Residues alanine 49–leucine 66 form a helical membrane-spanning segment. The Mitochondrial intermembrane portion of the chain corresponds to glutamate 67 to leucine 94.

It belongs to the Tom22 family. Forms part of the preprotein translocase complex of the outer mitochondrial membrane (TOM complex) which consists of at least 6 different proteins (TOM5, TOM6, TOM7, TOM20, TOM22/TOM9 and TOM40). In terms of tissue distribution, expressed in roots, flowers, young cotyledons and leaves.

The protein resides in the mitochondrion outer membrane. Central component of the receptor complex responsible for the recognition and translocation of cytosolically synthesized mitochondrial preproteins. Together with TOM20 functions as the transit peptide receptor at the surface of the mitochondrion outer membrane and facilitates the movement of preproteins into the translocation pore. This is Mitochondrial import receptor subunit TOM9-1 (TOM9-1) from Arabidopsis thaliana (Mouse-ear cress).